A 181-amino-acid polypeptide reads, in one-letter code: GMP synthase [glutamine-hydrolyzing] subunit A (181 aa).

The Glutamine amidotransferase type-1 domain maps to 2 to 181 (KILVVNNYGQ…FDNFLEICRR (180 aa)). Cysteine 72 (nucleophile) is an active-site residue. Catalysis depends on residues histidine 159 and glutamate 161.

As to quaternary structure, heterodimer composed of a glutamine amidotransferase subunit (A) and a GMP-binding subunit (B).

The catalysed reaction is XMP + L-glutamine + ATP + H2O = GMP + L-glutamate + AMP + diphosphate + 2 H(+). It participates in purine metabolism; GMP biosynthesis; GMP from XMP (L-Gln route): step 1/1. Its function is as follows. Catalyzes the synthesis of GMP from XMP. The polypeptide is GMP synthase [glutamine-hydrolyzing] subunit A (Methanothrix thermoacetophila (strain DSM 6194 / JCM 14653 / NBRC 101360 / PT) (Methanosaeta thermophila)).